We begin with the raw amino-acid sequence, 484 residues long: Cysteine--tRNA ligase (484 aa).

C29 contributes to the Zn(2+) binding site. A 'HIGH' region motif is present at residues 31–41 (PTVQSAPHIGH). Residues C219, H244, and E248 each coordinate Zn(2+). The 'KMSKS' region motif lies at 275–279 (KMSKS). K278 contacts ATP.

The protein belongs to the class-I aminoacyl-tRNA synthetase family. Monomer. Zn(2+) is required as a cofactor.

It is found in the cytoplasm. The enzyme catalyses tRNA(Cys) + L-cysteine + ATP = L-cysteinyl-tRNA(Cys) + AMP + diphosphate. The polypeptide is Cysteine--tRNA ligase (Clavibacter sepedonicus (Clavibacter michiganensis subsp. sepedonicus)).